Consider the following 330-residue polypeptide: Probable ADP,ATP carrier protein At5g56450 (330 aa).

Acidic residues predominate over residues 1–10 (MCISKEDEED). The interval 1 to 22 (MCISKEDEEDPSRNRRNQSPLS) is disordered. Transmembrane regions (helical) follow at residues 27–61 (LKHF…LQTQ), 103–127 (GSSV…RSIL), 137–171 (IFSG…RLAA), 203–230 (GLPA…EIFS), 236–270 (ELAL…IMMQ), and 300–325 (GALS…KRFL). Solcar repeat units lie at residues 28–126 (KHFQ…YRSI), 139–228 (SGAL…VKEI), and 241–324 (KRWG…VKRF). ADP contacts are provided by arginine 108 and lysine 120. Residue arginine 264 coordinates ADP. Residues 264-269 (RRRIMM) carry the Substrate recognition motif.

The protein belongs to the mitochondrial carrier (TC 2.A.29) family. In terms of assembly, monomer.

The protein localises to the membrane. It carries out the reaction ADP(in) + ATP(out) = ADP(out) + ATP(in). Its function is as follows. ADP:ATP antiporter that catalyzes the exchange of ADP and ATP across the membrane. The chain is Probable ADP,ATP carrier protein At5g56450 from Arabidopsis thaliana (Mouse-ear cress).